The primary structure comprises 503 residues: Glycerol kinase (503 aa).

Thr14 lines the ADP pocket. The ATP site is built by Thr14, Thr15, and Ser16. Thr14 contacts sn-glycerol 3-phosphate. Arg18 is a binding site for ADP. Positions 84, 85, 136, and 246 each coordinate sn-glycerol 3-phosphate. The glycerol site is built by Arg84, Glu85, Tyr136, Asp246, and Gln247. ADP-binding residues include Thr268 and Gly311. ATP is bound by residues Thr268, Gly311, Gln315, and Gly412. 2 residues coordinate ADP: Gly412 and Asn416.

It belongs to the FGGY kinase family.

It carries out the reaction glycerol + ATP = sn-glycerol 3-phosphate + ADP + H(+). The protein operates within polyol metabolism; glycerol degradation via glycerol kinase pathway; sn-glycerol 3-phosphate from glycerol: step 1/1. Inhibited by fructose 1,6-bisphosphate (FBP). Its function is as follows. Key enzyme in the regulation of glycerol uptake and metabolism. Catalyzes the phosphorylation of glycerol to yield sn-glycerol 3-phosphate. The polypeptide is Glycerol kinase (Haemophilus influenzae (strain PittEE)).